Here is a 435-residue protein sequence, read N- to C-terminus: 26S proteasome regulatory subunit 7 (435 aa).

Residues 1 to 23 (MPDHLGDDMRKTKKDDTKEEEKN) are compositionally biased toward basic and acidic residues. Positions 1 to 24 (MPDHLGDDMRKTKKDDTKEEEKNF) are disordered. 218–225 (GPPGTGKT) provides a ligand contact to ATP.

This sequence belongs to the AAA ATPase family.

The protein resides in the cytoplasm. It localises to the nucleus. Functionally, the 26S proteasome is involved in the ATP-dependent degradation of ubiquitinated proteins. The regulatory (or ATPase) complex confers ATP dependency and substrate specificity to the 26S complex. The chain is 26S proteasome regulatory subunit 7 (rpt-1) from Caenorhabditis elegans.